A 428-amino-acid chain; its full sequence is GTPase Obg (428 aa).

The Obg domain maps to 1–158; it reads MFIDQVKIYV…RDVILELKVL (158 aa). Residues 159–329 form the OBG-type G domain; sequence ADVGLVGFPS…LLFEVANLIE (171 aa). GTP-binding positions include 165 to 172, 190 to 194, 212 to 215, 282 to 285, and 310 to 312; these read GFPSVGKS, FTTIV, DLPG, NKMD, and SAV. The Mg(2+) site is built by Ser172 and Thr192. Residues 350–428 form the OCT domain; the sequence is KFETEGVKFD…ILEYEFEFID (79 aa).

This sequence belongs to the TRAFAC class OBG-HflX-like GTPase superfamily. OBG GTPase family. Monomer. Mg(2+) is required as a cofactor.

The protein resides in the cytoplasm. An essential GTPase which binds GTP, GDP and possibly (p)ppGpp with moderate affinity, with high nucleotide exchange rates and a fairly low GTP hydrolysis rate. Plays a role in control of the cell cycle, stress response, ribosome biogenesis and in those bacteria that undergo differentiation, in morphogenesis control. The polypeptide is GTPase Obg (Bacillus anthracis).